We begin with the raw amino-acid sequence, 499 residues long: Leukocyte immunoglobulin-like receptor subfamily A member 4 (499 aa).

The first 23 residues, methionine 1 to alanine 23, serve as a signal peptide directing secretion. Ig-like C2-type domains lie at glutamate 24 to threonine 118, proline 123 to leucine 213, proline 224 to aspartate 313, and proline 324 to leucine 413. Residues glutamate 24–asparagine 446 are Extracellular-facing. A disulfide bridge connects residues cysteine 49 and cysteine 98. Residue asparagine 138 is glycosylated (N-linked (GlcNAc...) asparagine). Cysteine 143 and cysteine 195 are oxidised to a cystine. Asparagine 239, asparagine 279, and asparagine 300 each carry an N-linked (GlcNAc...) asparagine glycan. An intrachain disulfide couples cysteine 244 to cysteine 295. Cysteine 344 and cysteine 395 are joined by a disulfide. Tyrosine 404 carries the 3'-nitrotyrosine modification. The helical transmembrane segment at leucine 447–alanine 467 threads the bilayer. The Cytoplasmic portion of the chain corresponds to glutamine 468–isoleucine 499.

As to quaternary structure, interacts with FCER1G; this stabilizes the expression of both proteins at the cell membrane. Interacts with BST2; leads to activation of LILRA4-mediated signaling and down-regulation of the innate immune response to viral pathogens. Detected on plasmacytoid dendritic cells (at protein level). Detected on plasmacytoid dendritic cells, but not on monocytes or B cells.

The protein localises to the cell membrane. Functionally, functions coreceptor to limit the innate immune responses to viral infections; signaling occurs via FCER1G. Down-regulates the production of IFNA1, IFNA2, IFNA4, IFNB1 and TNF by plasmacytoid dendritic cells that have been exposed to influenza virus or cytidine-phosphate-guanosine (CpG) dinucleotides, indicating it functions as a negative regulator of TLR7 and TLR9 signaling cascades. Down-regulates interferon production in response to interaction with BST2 on HIV-1 infected cells. Activates a signaling cascade in complex with FCER1G that results in phosphorylation of Src family and Syk kinases and thereby triggers mobilization of intracellular Ca(2+). Does not interfere with the differentiation of plasmacytoid dendritic cells into antigen-presenting cells. The protein is Leukocyte immunoglobulin-like receptor subfamily A member 4 of Homo sapiens (Human).